The sequence spans 244 residues: NAD(P)H-quinone oxidoreductase subunit K (244 aa).

4 residues coordinate [4Fe-4S] cluster: C60, C61, C125, and C156.

This sequence belongs to the complex I 20 kDa subunit family. In terms of assembly, NDH-1 can be composed of about 15 different subunits; different subcomplexes with different compositions have been identified which probably have different functions. [4Fe-4S] cluster is required as a cofactor.

The protein resides in the cellular thylakoid membrane. It carries out the reaction a plastoquinone + NADH + (n+1) H(+)(in) = a plastoquinol + NAD(+) + n H(+)(out). The enzyme catalyses a plastoquinone + NADPH + (n+1) H(+)(in) = a plastoquinol + NADP(+) + n H(+)(out). Functionally, NDH-1 shuttles electrons from an unknown electron donor, via FMN and iron-sulfur (Fe-S) centers, to quinones in the respiratory and/or the photosynthetic chain. The immediate electron acceptor for the enzyme in this species is believed to be plastoquinone. Couples the redox reaction to proton translocation, and thus conserves the redox energy in a proton gradient. Cyanobacterial NDH-1 also plays a role in inorganic carbon-concentration. The protein is NAD(P)H-quinone oxidoreductase subunit K of Prochlorococcus marinus (strain AS9601).